The sequence spans 250 residues: Flavin-dependent thymidylate synthase (250 aa).

The 227-residue stretch at 7–233 (LRVQLIAKTD…PSIFGDFDIA (227 aa)) folds into the ThyX domain. FAD is bound by residues S71, 95-97 (RHR), and Q103. Residues 92–95 (ELIR), 103–107 (QLSQR), and R172 contribute to the dUMP site. Positions 95-105 (RHRHFSYSQLS) match the ThyX motif motif. FAD contacts are provided by residues 188–190 (NYR) and H194. R199 serves as a coordination point for dUMP. The active-site Involved in ionization of N3 of dUMP, leading to its activation is the R199.

It belongs to the thymidylate synthase ThyX family. Homotetramer. Requires FAD as cofactor.

The enzyme catalyses dUMP + (6R)-5,10-methylene-5,6,7,8-tetrahydrofolate + NADPH + H(+) = dTMP + (6S)-5,6,7,8-tetrahydrofolate + NADP(+). It functions in the pathway pyrimidine metabolism; dTTP biosynthesis. Its function is as follows. Catalyzes the reductive methylation of 2'-deoxyuridine-5'-monophosphate (dUMP) to 2'-deoxythymidine-5'-monophosphate (dTMP) while utilizing 5,10-methylenetetrahydrofolate (mTHF) as the methyl donor, and NADPH and FADH(2) as the reductant. The protein is Flavin-dependent thymidylate synthase of Mycobacteroides abscessus (strain ATCC 19977 / DSM 44196 / CCUG 20993 / CIP 104536 / JCM 13569 / NCTC 13031 / TMC 1543 / L948) (Mycobacterium abscessus).